Here is a 101-residue protein sequence, read N- to C-terminus: CLAVATA3/ESR (CLE)-related protein 18 (101 aa).

An N-terminal signal peptide occupies residues 1–25 (MHLLKGGVVLIITLILFLITSSIVA). The tract at residues 37–58 (RQIPTGPDPLHNPPQPSPKHHH) is disordered. A hydroxyproline mark is found at P40 and P43. Residues 42–53 (GPDPLHNPPQPS) are compositionally biased toward pro residues. A glycan (O-linked (Ara...) hydroxyproline) is linked at P43. Position 76 is a sulfotyrosine (Y76). Position 84 is a hydroxyproline (P84).

The protein belongs to the CLV3/ESR signal peptide family. The tyrosine sulfation is critical for the function of the peptide. Post-translationally, the O-glycosylation (arabinosylation) of the hydroxyproline Pro-43 enhances binding affinity of the CLE18p peptide for its receptor. As to expression, expressed in roots, leaves, siliques and seedlings.

Its subcellular location is the secreted. It is found in the extracellular space. Functionally, root growth factor that regulates the pattern of root growth and lateral root development by modulating the length and the number of cortical cells in the root apical meristem (RAM), and the anticlinal asymmetric cell divisions in lateral root initiation cells. Its function is as follows. Extracellular signal peptide that regulates cell fate. Represses root apical meristem maintenance. Root growth factor that regulates the pattern of root growth and lateral root development. Regulates the transition of protophloem cells from proliferation to differentiation, thus impinging on postembryonic growth capacity of the root meristem; this signaling pathway requires CRN and CLV2. The sequence is that of CLAVATA3/ESR (CLE)-related protein 18 from Arabidopsis thaliana (Mouse-ear cress).